The chain runs to 209 residues: Chalcone isomerase-like protein 2 (209 aa).

The protein belongs to the chalcone isomerase family. In terms of assembly, component an active demethylxanthohumol (DMX) biosynthetic metabolon in glandular trichomes (lupulin glands) that encompasses a chalcone synthase (CHS) and a membrane-bound prenyltransferase. Interacts with CHS_H1 and PT1L. As to expression, mostly expressed in glandular trichomes (lupulin glands), and, to a lower extent, in cones, cones bracts, leaves, stems and roots.

The protein localises to the cytoplasm. The catalysed reaction is a chalcone = a flavanone.. The protein operates within secondary metabolite biosynthesis; flavonoid biosynthesis. In terms of biological role, involved in the biosynthesis of prenylated phenolics natural products which contribute to the bitter taste of beer and display broad biological activities. Involved in anthocyanin biosynthesis. Polyketide binding proteins (PBP) which promotes the catalytic activities of CHS_H1 and PT1L and triggers demethylxanthohumol (DMX) production. This Humulus lupulus (European hop) protein is Chalcone isomerase-like protein 2.